We begin with the raw amino-acid sequence, 319 residues long: tRNA (guanine-N(7)-)-methyltransferase (319 aa).

The interval 1-44 (MSESPETPEPSPAQSPEAAPEQPQAARPVTPGSQASFGTYGGRP) is disordered. The span at 14-26 (QSPEAAPEQPQAA) shows a compositional bias: low complexity. 4 residues coordinate S-adenosyl-L-methionine: E103, E128, N155, and D178. D178 is a catalytic residue. Substrate contacts are provided by K182 and D214. The interval 262–288 (APVKEGRAPVSTEHTGPNEGVDETGGW) is disordered. Position 298–301 (298–301 (TSFE)) interacts with substrate.

The protein belongs to the class I-like SAM-binding methyltransferase superfamily. TrmB family.

The catalysed reaction is guanosine(46) in tRNA + S-adenosyl-L-methionine = N(7)-methylguanosine(46) in tRNA + S-adenosyl-L-homocysteine. Its pathway is tRNA modification; N(7)-methylguanine-tRNA biosynthesis. Its function is as follows. Catalyzes the formation of N(7)-methylguanine at position 46 (m7G46) in tRNA. The sequence is that of tRNA (guanine-N(7)-)-methyltransferase from Arthrobacter sp. (strain FB24).